The sequence spans 224 residues: Ribulose-phosphate 3-epimerase (224 aa).

Residue Ser8 participates in substrate binding. Residues His31, Asp33, and His64 each coordinate a divalent metal cation. Asp33 acts as the Proton acceptor in catalysis. Substrate contacts are provided by residues His64, 140 to 143 (GFGG), 173 to 175 (DGG), and 195 to 196 (GS). Residue Asp173 participates in a divalent metal cation binding. Asp173 serves as the catalytic Proton donor.

The protein belongs to the ribulose-phosphate 3-epimerase family. Requires a divalent metal cation as cofactor.

The catalysed reaction is D-ribulose 5-phosphate = D-xylulose 5-phosphate. It participates in carbohydrate degradation. Functionally, catalyzes the reversible epimerization of D-ribulose 5-phosphate to D-xylulose 5-phosphate. This is Ribulose-phosphate 3-epimerase from Mycobacterium leprae (strain TN).